The following is a 339-amino-acid chain: Sphingomyelinase D (339 aa).

The N-terminal stretch at 1 to 21 (MVSLLRLCSFLLAAGSILVQG) is a signal peptide. His-60 is an active-site residue. 3 residues coordinate Mg(2+): Glu-80, Asp-82, and Asp-128. An SMD-tail motif is present at residues 309–316 (ATVDDNPW). A disordered region spans residues 313-339 (DNPWSSMSKKGSSKSSWVKGEVPSIAH). Residues 317 to 328 (SSMSKKGSSKSS) show a composition bias toward low complexity.

It belongs to the sphingomyelinase D/phospholipase D family. Mg(2+) is required as a cofactor.

It localises to the secreted. The enzyme catalyses a sphingomyelin + H2O = an N-acylsphing-4-enine 1-phosphate + choline + H(+). Its function is as follows. Catalyzes the hydrolysis of sphingomyelin. Sphingomyelinases D are produced by some spider in their venoms, but also by arthropods such as ticks, or pathogenic bacteria and fungi. They might play a role in pathogenicity through different mechanisms, such as membrane destabilization and host cell penetration, but also pulmonary inflammation and cutaneous lesions. The polypeptide is Sphingomyelinase D (Arthroderma benhamiae (strain ATCC MYA-4681 / CBS 112371) (Trichophyton mentagrophytes)).